Consider the following 374-residue polypeptide: Putative glutamate--cysteine ligase 2 (374 aa).

It belongs to the glutamate--cysteine ligase type 2 family. YbdK subfamily.

It catalyses the reaction L-cysteine + L-glutamate + ATP = gamma-L-glutamyl-L-cysteine + ADP + phosphate + H(+). In terms of biological role, ATP-dependent carboxylate-amine ligase which exhibits weak glutamate--cysteine ligase activity. This chain is Putative glutamate--cysteine ligase 2, found in Paracidovorax citrulli (strain AAC00-1) (Acidovorax citrulli).